The sequence spans 500 residues: Nucleolar and spindle-associated protein 1 (500 aa).

4 disordered regions span residues 48-204 (KNET…NFKK), 241-299 (TKKS…ASKS), 319-353 (VRFS…PESE), and 365-500 (ELLP…VPVK). Over residues 82–92 (THRRGRGRKPI) the composition is skewed to basic residues. Residues 113–127 (NMASSIDRTQQQNCT) are compositionally biased toward polar residues. Over residues 264–274 (SRLSLLSPLPR) the composition is skewed to low complexity. Residues 276-298 (TGASPSRTPMSQRRSCRSSTASK) show a composition bias toward polar residues. The segment covering 323 to 332 (EATKDNEHKR) has biased composition (basic and acidic residues). Positions 380–392 (ITLNTTTQPSPAT) are enriched in polar residues. Residues 442–451 (PWGESKENKP) show a composition bias toward basic and acidic residues. Positions 452–469 (DPNSNVSVLKNNYKQPHL) are enriched in polar residues.

The protein belongs to the NUSAP family. As to quaternary structure, interacts with DNA, microtubules, ipo7, kpna2 and kpnb1. Microtubule stabilization is inhibited by ipo7 and kpna2, while microtubule bundling is inhibited by kpnb1. Active GTP-bound ran causes dissociation of ipo7 and kpnb1.

It localises to the cytoplasm. The protein resides in the nucleus. Its subcellular location is the cytoskeleton. The protein localises to the spindle. Functionally, microtubule-associated protein with the capacity to bundle and stabilize microtubules. May associate with chromosomes and promote the organization of meiotic or mitotic spindle microtubules around them. This Xenopus tropicalis (Western clawed frog) protein is Nucleolar and spindle-associated protein 1 (nusap1).